We begin with the raw amino-acid sequence, 128 residues long: Small ribosomal subunit protein uS11 (128 aa).

The protein belongs to the universal ribosomal protein uS11 family. Part of the 30S ribosomal subunit. Interacts with proteins S7 and S18. Binds to IF-3.

Located on the platform of the 30S subunit, it bridges several disparate RNA helices of the 16S rRNA. Forms part of the Shine-Dalgarno cleft in the 70S ribosome. In Porphyromonas gingivalis (strain ATCC BAA-308 / W83), this protein is Small ribosomal subunit protein uS11.